Consider the following 457-residue polypeptide: tRNA modification GTPase MnmE (457 aa).

Arg-23, Glu-85, and Arg-124 together coordinate (6S)-5-formyl-5,6,7,8-tetrahydrofolate. In terms of domain architecture, TrmE-type G spans Gly-220 to Leu-376. Residue Asn-230 participates in K(+) binding. GTP is bound by residues Asn-230–Ser-235, Thr-249–Thr-255, and Asp-274–Gly-277. Ser-234 provides a ligand contact to Mg(2+). Residues Thr-249, Leu-251, and Thr-254 each coordinate K(+). Thr-255 serves as a coordination point for Mg(2+). Residue Lys-457 participates in (6S)-5-formyl-5,6,7,8-tetrahydrofolate binding.

The protein belongs to the TRAFAC class TrmE-Era-EngA-EngB-Septin-like GTPase superfamily. TrmE GTPase family. In terms of assembly, homodimer. Heterotetramer of two MnmE and two MnmG subunits. It depends on K(+) as a cofactor.

Its subcellular location is the cytoplasm. In terms of biological role, exhibits a very high intrinsic GTPase hydrolysis rate. Involved in the addition of a carboxymethylaminomethyl (cmnm) group at the wobble position (U34) of certain tRNAs, forming tRNA-cmnm(5)s(2)U34. The chain is tRNA modification GTPase MnmE from Nitratidesulfovibrio vulgaris (strain DP4) (Desulfovibrio vulgaris).